Reading from the N-terminus, the 125-residue chain is Protein MGF 110-7L (125 aa).

Residues 1–20 form the signal peptide; the sequence is MLVIILGVIGLLASSNLVSS. Asn69, Asn70, and Asn105 each carry an N-linked (GlcNAc...) asparagine; by host glycan.

The protein belongs to the asfivirus MGF 110 family.

Plays a role in virus cell tropism, and may be required for efficient virus replication in macrophages. The chain is Protein MGF 110-7L from Ornithodoros (relapsing fever ticks).